Here is a 137-residue protein sequence, read N- to C-terminus: Large ribosomal subunit protein uL16 (137 aa).

It belongs to the universal ribosomal protein uL16 family. In terms of assembly, part of the 50S ribosomal subunit.

In terms of biological role, binds 23S rRNA and is also seen to make contacts with the A and possibly P site tRNAs. The polypeptide is Large ribosomal subunit protein uL16 (Psychrobacter sp. (strain PRwf-1)).